The primary structure comprises 148 residues: D-aminoacyl-tRNA deacylase (148 aa).

The Gly-cisPro motif, important for rejection of L-amino acids signature appears at 137-138 (GP).

This sequence belongs to the DTD family. Homodimer.

Its subcellular location is the cytoplasm. It carries out the reaction glycyl-tRNA(Ala) + H2O = tRNA(Ala) + glycine + H(+). The enzyme catalyses a D-aminoacyl-tRNA + H2O = a tRNA + a D-alpha-amino acid + H(+). An aminoacyl-tRNA editing enzyme that deacylates mischarged D-aminoacyl-tRNAs. Also deacylates mischarged glycyl-tRNA(Ala), protecting cells against glycine mischarging by AlaRS. Acts via tRNA-based rather than protein-based catalysis; rejects L-amino acids rather than detecting D-amino acids in the active site. By recycling D-aminoacyl-tRNA to D-amino acids and free tRNA molecules, this enzyme counteracts the toxicity associated with the formation of D-aminoacyl-tRNA entities in vivo and helps enforce protein L-homochirality. The sequence is that of D-aminoacyl-tRNA deacylase from Enterococcus faecalis (strain ATCC 700802 / V583).